The primary structure comprises 273 residues: Multidrug-efflux transporter 2 regulator (273 aa).

An HTH merR-type domain is found at 8 to 77 (YFTTGEFSKL…LKEIKCLIKG (70 aa)). The segment at residues 11 to 30 (TGEFSKLCRVKKQTLFHYDE) is a DNA-binding region (H-T-H motif).

Functionally, activates transcription of the blt gene in response to structurally dissimilar drugs. In Bacillus subtilis (strain 168), this protein is Multidrug-efflux transporter 2 regulator (bltR).